The sequence spans 529 residues: Potassium voltage-gated channel subfamily A member 6 (529 aa).

Positions 1 to 35 (MRSEKSLTLAAPGEVRGPEGEQQDAGEFQEAEGGG) are disordered. Residues 1-171 (MRSEKSLTLA…LLFEYPESSG (171 aa)) are Cytoplasmic-facing. At serine 3 the chain carries Phosphoserine. Acidic residues predominate over residues 21–30 (EQQDAGEFQE). A helical transmembrane segment spans residues 172–193 (PARGIAIVSVLVILISIVIFCL). Residues 194–262 (ETLPQFRADG…TLGGSFFTDP (69 aa)) are Extracellular-facing. The disordered stretch occupies residues 203 to 238 (GRGGSNEGSGTRLSPASRSHEEEDEDEDSYAFPGSI). The span at 210–219 (GSGTRLSPAS) shows a compositional bias: polar residues. A helical transmembrane segment spans residues 263–284 (FFLVETLCIVWFTFELLVRFSA). A lipid anchor (S-palmitoyl cysteine) is attached at cysteine 285. The Cytoplasmic portion of the chain corresponds to 285 to 295 (CPSKAAFFRNI). A helical transmembrane segment spans residues 296-316 (MNIIDLVAIFPYFITLGTELV). Over 317–337 (QRHEQQSVSGGSGQNGQQAMS) the chain is Extracellular. A helical; Voltage-sensor membrane pass occupies residues 338–358 (LAILRVIRLVRVFRIFKLSRH). The Cytoplasmic portion of the chain corresponds to 359–373 (SKGLQILGKTLQASM). The S4-S5 linker stretch occupies residues 360-373 (KGLQILGKTLQASM). The helical transmembrane segment at 374 to 395 (RELGLLIFFLFIGVILFSSAVY) threads the bilayer. At 396–409 (FAEADDVDSLFPSI) the chain is on the extracellular side. An intramembrane region (helical) is located at residues 410-421 (PDAFWWAVVTMT). A Selectivity filter motif is present at residues 422–427 (TVGYGD). An intramembrane segment occupies 422 to 429 (TVGYGDMY). At 430–436 (PMTVGGK) the chain is on the extracellular side. A helical transmembrane segment spans residues 437 to 465 (IVGSLCAIAGVLTIALPVPVIVSNFNYFY). At 466 to 529 (HRETEQEEQG…YAEKRMLTEV (64 aa)) the chain is on the cytoplasmic side. The interval 488–513 (DLKATDNGLGKPDFAEASRERRPSYL) is disordered. The span at 500-510 (DFAEASRERRP) shows a compositional bias: basic and acidic residues. Serine 511 bears the Phosphoserine; by PKA mark. The PDZ-binding signature appears at 527 to 529 (TEV).

Belongs to the potassium channel family. A (Shaker) (TC 1.A.1.2) subfamily. Kv1.6/KCNA6 sub-subfamily. As to quaternary structure, homotetramer and heterotetramer of potassium channel proteins. Interacts with KCNAB1 and KCNAB2.

The protein localises to the cell membrane. The catalysed reaction is K(+)(in) = K(+)(out). Functionally, voltage-gated potassium channel that mediates transmembrane potassium transport in excitable membranes. Forms tetrameric potassium-selective channels through which potassium ions pass in accordance with their electrochemical gradient. The channel alternates between opened and closed conformations in response to the voltage difference across the membrane. Can form functional homotetrameric channels and heterotetrameric channels that contain variable proportions of KCNA1, KCNA2, KCNA4, KCNA6, and possibly other family members as well; channel properties depend on the type of alpha subunits that are part of the channel. Channel properties are modulated by cytoplasmic beta subunits that regulate the subcellular location of the alpha subunits and promote rapid inactivation. Homotetrameric channels display rapid activation and slow inactivation. The sequence is that of Potassium voltage-gated channel subfamily A member 6 (Kcna6) from Mus musculus (Mouse).